A 164-amino-acid chain; its full sequence is UPF0304 protein PM1500 (164 aa).

Belongs to the UPF0304 family.

The protein is UPF0304 protein PM1500 of Pasteurella multocida (strain Pm70).